Reading from the N-terminus, the 342-residue chain is GTP 3',8-cyclase (342 aa).

A Radical SAM core domain is found at 18–247 (GFSRRFYYLR…QLRGADDGPA (230 aa)). Residue R27 coordinates GTP. Residues C34 and C38 each coordinate [4Fe-4S] cluster. Y40 is an S-adenosyl-L-methionine binding site. C41 provides a ligand contact to [4Fe-4S] cluster. GTP is bound at residue R81. G85 contacts S-adenosyl-L-methionine. T112 contacts GTP. An S-adenosyl-L-methionine-binding site is contributed by S136. K173 is a GTP binding site. M207 provides a ligand contact to S-adenosyl-L-methionine. Residues C270 and C273 each contribute to the [4Fe-4S] cluster site. GTP is bound at residue 275–277 (RLR). [4Fe-4S] cluster is bound at residue C287.

Belongs to the radical SAM superfamily. MoaA family. As to quaternary structure, monomer and homodimer. Requires [4Fe-4S] cluster as cofactor.

It carries out the reaction GTP + AH2 + S-adenosyl-L-methionine = (8S)-3',8-cyclo-7,8-dihydroguanosine 5'-triphosphate + 5'-deoxyadenosine + L-methionine + A + H(+). Its pathway is cofactor biosynthesis; molybdopterin biosynthesis. Functionally, catalyzes the cyclization of GTP to (8S)-3',8-cyclo-7,8-dihydroguanosine 5'-triphosphate. In Aeromonas hydrophila subsp. hydrophila (strain ATCC 7966 / DSM 30187 / BCRC 13018 / CCUG 14551 / JCM 1027 / KCTC 2358 / NCIMB 9240 / NCTC 8049), this protein is GTP 3',8-cyclase.